The primary structure comprises 442 residues: HTH-type transcriptional regulator NorG (442 aa).

Residues 2-46 (KIPPQRQLAIQYNVNRVTIIKSIELLEAEGFIYTKVGSGTYVNDY) form the HTH gntR-type domain. Positions 6 to 25 (QRQLAIQYNVNRVTIIKSIE) form a DNA-binding region, H-T-H motif. Position 288 is an N6-(pyridoxal phosphate)lysine (Lys288).

The protein in the C-terminal section; belongs to the class-I pyridoxal-phosphate-dependent aminotransferase family. It depends on pyridoxal 5'-phosphate as a cofactor.

Positively regulates the expression of the NorB efflux pump and negatively regulates the expression of the AbcA efflux pump. Binds specifically to the promoters of norA, norB and norC and abcA genes. Could also have an aminotransferase activity. The polypeptide is HTH-type transcriptional regulator NorG (norG) (Staphylococcus aureus (strain Mu50 / ATCC 700699)).